Here is a 39-residue protein sequence, read N- to C-terminus: Omega-theraphotoxin-Asp1a (39 aa).

3 disulfides stabilise this stretch: C4-C25, C8-C31, and C17-C36.

As to expression, expressed by the venom gland.

The protein resides in the secreted. Functionally, toxin that inhibits voltage-gated calcium channels in rat cerebellar granule cells (IC(50)&lt;200 nM). Is lethal to cockroaches. This Aphonopelma sp. (American tarantula) protein is Omega-theraphotoxin-Asp1a.